Consider the following 140-residue polypeptide: Ctenidin-1 (140 aa).

A signal peptide spans 1–19; sequence MKHLIPLIVMASVVLAVYA. Position 138 is a glycine amide (Gly138).

Belongs to the glycine-rich peptide family. As to expression, expressed in hemocytes (at protein level).

It localises to the secreted. In terms of biological role, antimicrobial protein with bacteriostatic activity against the Gram-negative bacterium E.coli, and very weak activity against the Gram-positive bacterium S.aureus. Lacks activity against the yeast C.albicans. This chain is Ctenidin-1, found in Cupiennius salei (American wandering spider).